We begin with the raw amino-acid sequence, 87 residues long: HssA/B-like protein 7 (87 aa).

The segment covering 1-22 (MSILSALTSISNPMKSTKSSVA) has biased composition (polar residues). The interval 1 to 23 (MSILSALTSISNPMKSTKSSVAN) is disordered.

It belongs to the hssA/B family.

The chain is HssA/B-like protein 7 (hssl7) from Dictyostelium discoideum (Social amoeba).